A 437-amino-acid polypeptide reads, in one-letter code: Adenylosuccinate synthetase (437 aa).

GTP contacts are provided by residues 12–18 and 40–42; these read GDEGKGK and GHT. The active-site Proton acceptor is Asp-13. Mg(2+) contacts are provided by Asp-13 and Gly-40. IMP is bound by residues 13-16, 38-41, Thr-128, Arg-142, Gln-223, Thr-238, and Arg-302; these read DEGK and NAGH. His-41 (proton donor) is an active-site residue. Position 298-304 (298-304) interacts with substrate; sequence TTTGRKR. Residues Arg-304, 330-332, and 412-414 each bind GTP; these read KLD and SLG.

The protein belongs to the adenylosuccinate synthetase family. In terms of assembly, homodimer. The cofactor is Mg(2+).

The protein resides in the cytoplasm. The enzyme catalyses IMP + L-aspartate + GTP = N(6)-(1,2-dicarboxyethyl)-AMP + GDP + phosphate + 2 H(+). It participates in purine metabolism; AMP biosynthesis via de novo pathway; AMP from IMP: step 1/2. Functionally, plays an important role in the de novo pathway of purine nucleotide biosynthesis. Catalyzes the first committed step in the biosynthesis of AMP from IMP. The chain is Adenylosuccinate synthetase from Trichodesmium erythraeum (strain IMS101).